The chain runs to 424 residues: MYNTILKDTLSKGLFTAHQKVLIAVSGGIDSINLLQFLYQYQKELSISIGIAHINHGQRKESEKEEEYIRQWGQIHDVPVFISYFQGIFSEDRARNHRYNFFSKVMREEGYTALVTAHHADDQAETVFMRILRGSRLRYLSGIKQVSAFANGQLIRPFLPYKKELLPNIFHFEDASNASSDYLRNRIRNVYFPALERENNQLKDSLITLSEETECLFTALTDLTRSIEVTNCYDFLRQTHSVQEFLLQDYISKFPDLQVSKEQFRVILKLIRTKANIDYTIKSGYFLHKDYESFHITKIHPKTDSFKVEKRLELHNIQIFSQYLFSYGKFISQADITIPIYDTSPIILRRRKEGDRIFLGNHTKKIRRLFIDEKITLKEREEAVIGEQNKELIFVIVAGRTYLRKPSEHDIMKGKLYIENLEKR.

Residue 26 to 31 (SGGIDS) participates in ATP binding.

Belongs to the tRNA(Ile)-lysidine synthase family.

Its subcellular location is the cytoplasm. The enzyme catalyses cytidine(34) in tRNA(Ile2) + L-lysine + ATP = lysidine(34) in tRNA(Ile2) + AMP + diphosphate + H(+). Its function is as follows. Ligates lysine onto the cytidine present at position 34 of the AUA codon-specific tRNA(Ile) that contains the anticodon CAU, in an ATP-dependent manner. Cytidine is converted to lysidine, thus changing the amino acid specificity of the tRNA from methionine to isoleucine. The sequence is that of tRNA(Ile)-lysidine synthase from Streptococcus agalactiae serotype V (strain ATCC BAA-611 / 2603 V/R).